Consider the following 673-residue polypeptide: Methionine--tRNA ligase (673 aa).

The 'HIGH' region motif lies at 13 to 23; the sequence is PYANGSIHLGH. Residues Cys144, Cys147, Cys157, and Cys160 each contribute to the Zn(2+) site. A 'KMSKS' region motif is present at residues 330 to 334; the sequence is KMSKS. Lys333 provides a ligand contact to ATP. Residues 572–673 form the tRNA-binding domain; it reads DFAQLDLRIA…GRARAGMTIS (102 aa).

The protein belongs to the class-I aminoacyl-tRNA synthetase family. MetG type 1 subfamily. In terms of assembly, homodimer. The cofactor is Zn(2+).

The protein resides in the cytoplasm. It carries out the reaction tRNA(Met) + L-methionine + ATP = L-methionyl-tRNA(Met) + AMP + diphosphate. In terms of biological role, is required not only for elongation of protein synthesis but also for the initiation of all mRNA translation through initiator tRNA(fMet) aminoacylation. The chain is Methionine--tRNA ligase from Dichelobacter nodosus (strain VCS1703A).